A 251-amino-acid chain; its full sequence is Azurocidin (251 aa).

Positions 1-19 (MTRLTVLALLAGLLASSRA) are cleaved as a signal peptide. A propeptide spans 20 to 26 (GSSPLLD) (removed in mature form). Residues 25 to 26 (LD) constitute a propeptide, dipeptide found in non-mature form. The Peptidase S1 domain occupies 27 to 244 (IVGGRKARPR…FRDWIDGVLN (218 aa)). A possesses antibiotic activity region spans residues 46-70 (NQGRHFCGGALIHARFVMTAASCFQ). Cysteines 52 and 68 form a disulfide. An N-linked (GlcNAc...) asparagine; partial glycan is attached at asparagine 126. Asparagine 140 carries N-linked (GlcNAc...) asparagine glycosylation. 3 cysteine pairs are disulfide-bonded: cysteine 149–cysteine 207, cysteine 180–cysteine 186, and cysteine 197–cysteine 222. Residue asparagine 171 is glycosylated (N-linked (GlcNAc...) asparagine; partial). A propeptide spans 249 to 251 (GPA) (removed in mature form).

It belongs to the peptidase S1 family. Elastase subfamily. Post-translationally, cleavage of the N-terminal propeptide which is composed of 7 amino acids occurs in two steps. The initial cleavage of 5 amino acids is followed by the cleavage of a dipeptide to produce the mature form.

The protein resides in the cytoplasmic granule membrane. This is a neutrophil granule-derived antibacterial and monocyte- and fibroblast-specific chemotactic glycoprotein. Binds heparin. The cytotoxic action is limited to many species of Gram-negative bacteria; this specificity may be explained by a strong affinity of the very basic N-terminal half for the negatively charged lipopolysaccharides that are unique to the Gram-negative bacterial outer envelope. It may play a role in mediating recruitment of monocytes in the second wave of inflammation. Has antibacterial activity against the Gram-negative bacterium P.aeruginosa, this activity is inhibited by LPS from P.aeruginosa. Acting alone, it does not have antimicrobial activity against the Gram-negative bacteria A.actinomycetemcomitans ATCC 29532, A.actinomycetemcomitans NCTC 9709, A.actinomycetemcomitans FDC-Y4, H.aphrophilus ATCC 13252, E.corrodens ATCC 23834, C.sputigena ATCC 33123, Capnocytophaga sp ATCC 33124, Capnocytophaga sp ATCC 27872 or E.coli ML-35. Has antibacterial activity against C.sputigena ATCC 33123 when acting synergistically with either elastase or cathepsin G. The chain is Azurocidin from Homo sapiens (Human).